Reading from the N-terminus, the 438-residue chain is tRNA modification GTPase MnmE (438 aa).

Positions 20, 79, and 119 each coordinate (6S)-5-formyl-5,6,7,8-tetrahydrofolate. Residues 215-360 enclose the TrmE-type G domain; the sequence is GVEVAIVGPP…LEAALAARVG (146 aa). Residues 225 to 230, 244 to 250, and 269 to 272 contribute to the GTP site; these read NAGKSS, SDEAGTT, and DTAG. The Mg(2+) site is built by Ser229 and Thr250. Residue Lys438 participates in (6S)-5-formyl-5,6,7,8-tetrahydrofolate binding.

Belongs to the TRAFAC class TrmE-Era-EngA-EngB-Septin-like GTPase superfamily. TrmE GTPase family. In terms of assembly, homodimer. Heterotetramer of two MnmE and two MnmG subunits. The cofactor is K(+).

It localises to the cytoplasm. Exhibits a very high intrinsic GTPase hydrolysis rate. Involved in the addition of a carboxymethylaminomethyl (cmnm) group at the wobble position (U34) of certain tRNAs, forming tRNA-cmnm(5)s(2)U34. In Parvibaculum lavamentivorans (strain DS-1 / DSM 13023 / NCIMB 13966), this protein is tRNA modification GTPase MnmE.